The primary structure comprises 29 residues: Glucagon (29 aa).

Belongs to the glucagon family.

The protein resides in the secreted. Its function is as follows. Glucagon plays a key role in glucose metabolism and homeostasis. Regulates blood glucose by increasing gluconeogenesis and decreasing glycolysis. This Polypterus senegalus (Senegal bichir) protein is Glucagon (gcg).